The following is a 310-amino-acid chain: Thioredoxin reductase (310 aa).

34-41 (NGIQPGGQ) is an FAD binding site. Cysteines 135 and 138 form a disulfide. Residue 281–290 (DVQDKIYRQA) participates in FAD binding.

It belongs to the class-II pyridine nucleotide-disulfide oxidoreductase family. Homodimer. FAD serves as cofactor.

It is found in the cytoplasm. It catalyses the reaction [thioredoxin]-dithiol + NADP(+) = [thioredoxin]-disulfide + NADPH + H(+). The protein is Thioredoxin reductase (trxB) of Rickettsia bellii (strain RML369-C).